The following is a 193-amino-acid chain: Probable oligoribonuclease (193 aa).

Residues 15 to 177 (IIWIDCEMTG…DDIMESIAEL (163 aa)) form the Exonuclease domain. Tyrosine 136 is a catalytic residue.

This sequence belongs to the oligoribonuclease family.

In terms of biological role, 3'-to-5' exoribonuclease specific for small oligoribonucleotides. The polypeptide is Probable oligoribonuclease (Caenorhabditis elegans).